The sequence spans 370 residues: Phospho-N-acetylmuramoyl-pentapeptide-transferase (370 aa).

10 consecutive transmembrane segments (helical) span residues 31-51, 73-93, 98-118, 135-155, 177-197, 209-229, 251-271, 273-293, 298-318, and 347-367; these read LTSM…LYGL, TMGG…WGNL, IIVL…DDYM, LLSI…TGVI, GPVL…IIGS, GLAT…AYVS, VFLS…AHPA, VFMG…IVIL, ILLL…ILQV, and KIVI…LSTL.

It belongs to the glycosyltransferase 4 family. MraY subfamily. Mg(2+) is required as a cofactor.

The protein localises to the cell inner membrane. The enzyme catalyses UDP-N-acetyl-alpha-D-muramoyl-L-alanyl-gamma-D-glutamyl-meso-2,6-diaminopimeloyl-D-alanyl-D-alanine + di-trans,octa-cis-undecaprenyl phosphate = di-trans,octa-cis-undecaprenyl diphospho-N-acetyl-alpha-D-muramoyl-L-alanyl-D-glutamyl-meso-2,6-diaminopimeloyl-D-alanyl-D-alanine + UMP. It participates in cell wall biogenesis; peptidoglycan biosynthesis. Functionally, catalyzes the initial step of the lipid cycle reactions in the biosynthesis of the cell wall peptidoglycan: transfers peptidoglycan precursor phospho-MurNAc-pentapeptide from UDP-MurNAc-pentapeptide onto the lipid carrier undecaprenyl phosphate, yielding undecaprenyl-pyrophosphoryl-MurNAc-pentapeptide, known as lipid I. The protein is Phospho-N-acetylmuramoyl-pentapeptide-transferase of Leptospira borgpetersenii serovar Hardjo-bovis (strain JB197).